Reading from the N-terminus, the 356-residue chain is Glutamine synthetase cytosolic isozyme 1-1 (356 aa).

In terms of domain architecture, GS beta-grasp spans 19 to 99; it reads IIAEYIWIGG…VMCDCYTPAG (81 aa). The region spanning 106-356 is the GS catalytic domain; the sequence is KRHNAAKIFS…IAETTIIWKP (251 aa).

The protein belongs to the glutamine synthetase family. As to quaternary structure, homooctamer. As to expression, highly expressed in leaf blades, at intermediate levels in spikelets (rice flower) and at lower levels in roots.

The protein resides in the cytoplasm. The enzyme catalyses L-glutamate + NH4(+) + ATP = L-glutamine + ADP + phosphate + H(+). High-affinity glutamine synthetase involved in ammonium assimilation. Seems to be a major component of the cytosolic glutamine synthetic pathway in leaf blades. Plays an important role in maintaining carbon and nitrogen metabolic balance during ammonium assimilation in shoots and roots, thus controlling plant growth and development. Plays an important role in maintaining broad range of metabolites and transcripts involved in the maintenance of plant metabolic homeostasis and development of plastid in roots. The sequence is that of Glutamine synthetase cytosolic isozyme 1-1 from Oryza sativa subsp. japonica (Rice).